Reading from the N-terminus, the 166-residue chain is Ribosome maturation factor RimM (166 aa).

The region spanning 95–164 (EEEYYAYELV…KKIIVKEELL (70 aa)) is the PRC barrel domain.

This sequence belongs to the RimM family. As to quaternary structure, binds ribosomal protein uS19.

The protein resides in the cytoplasm. In terms of biological role, an accessory protein needed during the final step in the assembly of 30S ribosomal subunit, possibly for assembly of the head region. Essential for efficient processing of 16S rRNA. May be needed both before and after RbfA during the maturation of 16S rRNA. It has affinity for free ribosomal 30S subunits but not for 70S ribosomes. The sequence is that of Ribosome maturation factor RimM from Aquifex aeolicus (strain VF5).